The following is a 291-amino-acid chain: Probable 2-(5''-triphosphoribosyl)-3'-dephosphocoenzyme-A synthase (291 aa).

This sequence belongs to the CitG/MdcB family.

The enzyme catalyses 3'-dephospho-CoA + ATP = 2'-(5''-triphospho-alpha-D-ribosyl)-3'-dephospho-CoA + adenine. Functionally, involved in the formation of 2-(5''-phosphoribosyl)-3'-dephosphocoenzyme-A, the prosthetic group of the acyl-carrier protein of the malonate decarboxylase. In Pseudomonas syringae pv. syringae (strain B728a), this protein is Probable 2-(5''-triphosphoribosyl)-3'-dephosphocoenzyme-A synthase.